The following is a 148-amino-acid chain: Deoxyuridine 5'-triphosphate nucleotidohydrolase (148 aa).

Substrate is bound by residues 65-67 (RSG), asparagine 78, 82-84 (TID), and lysine 92.

The protein belongs to the dUTPase family. Mg(2+) serves as cofactor.

It catalyses the reaction dUTP + H2O = dUMP + diphosphate + H(+). The protein operates within pyrimidine metabolism; dUMP biosynthesis; dUMP from dCTP (dUTP route): step 2/2. Its function is as follows. This enzyme is involved in nucleotide metabolism: it produces dUMP, the immediate precursor of thymidine nucleotides and it decreases the intracellular concentration of dUTP so that uracil cannot be incorporated into DNA. The chain is Deoxyuridine 5'-triphosphate nucleotidohydrolase from Chlorobium phaeovibrioides (strain DSM 265 / 1930) (Prosthecochloris vibrioformis (strain DSM 265)).